Consider the following 642-residue polypeptide: Chaperone protein HtpG (642 aa).

Positions methionine 1–arginine 349 are a; substrate-binding. The interval glutamate 216–glutamate 238 is disordered. The segment covering lysine 224–glutamate 236 has biased composition (basic and acidic residues). A b region spans residues glutamate 350 to arginine 570. The c stretch occupies residues leucine 571–glycine 642.

The protein belongs to the heat shock protein 90 family. As to quaternary structure, homodimer.

The protein resides in the cytoplasm. In terms of biological role, molecular chaperone. Has ATPase activity. The protein is Chaperone protein HtpG of Magnetococcus marinus (strain ATCC BAA-1437 / JCM 17883 / MC-1).